Here is a 437-residue protein sequence, read N- to C-terminus: GTPase Der (437 aa).

EngA-type G domains lie at 3 to 167 (NLVA…SKEG) and 176 to 352 (PRFA…QART). GTP contacts are provided by residues 9–16 (GRPNVGKS), 56–60 (DTGGW), 119–122 (NKTD), 182–189 (GRPNAGKS), 229–233 (DTAGI), and 294–297 (NKWD). A KH-like domain is found at 353–437 (TRIPTARLNE…TPINIFIRQK (85 aa)).

This sequence belongs to the TRAFAC class TrmE-Era-EngA-EngB-Septin-like GTPase superfamily. EngA (Der) GTPase family. In terms of assembly, associates with the 50S ribosomal subunit.

Functionally, GTPase that plays an essential role in the late steps of ribosome biogenesis. This chain is GTPase Der, found in Phocaeicola vulgatus (strain ATCC 8482 / DSM 1447 / JCM 5826 / CCUG 4940 / NBRC 14291 / NCTC 11154) (Bacteroides vulgatus).